Here is a 440-residue protein sequence, read N- to C-terminus: tRNA-2-methylthio-N(6)-dimethylallyladenosine synthase (440 aa).

The MTTase N-terminal domain occupies 2 to 117 (KGLYIKTYGC…LPELIVKASR (116 aa)). Cys11, Cys47, Cys80, Cys157, Cys161, and Cys164 together coordinate [4Fe-4S] cluster. The Radical SAM core domain occupies 143 to 374 (NSQGSSAFLA…QELISKQQLE (232 aa)). Residues 377-440 (QSMIGKTIPV…RQNSLLGCAA (64 aa)) form the TRAM domain.

This sequence belongs to the methylthiotransferase family. MiaB subfamily. Monomer. The cofactor is [4Fe-4S] cluster.

The protein resides in the cytoplasm. It catalyses the reaction N(6)-dimethylallyladenosine(37) in tRNA + (sulfur carrier)-SH + AH2 + 2 S-adenosyl-L-methionine = 2-methylsulfanyl-N(6)-dimethylallyladenosine(37) in tRNA + (sulfur carrier)-H + 5'-deoxyadenosine + L-methionine + A + S-adenosyl-L-homocysteine + 2 H(+). Its function is as follows. Catalyzes the methylthiolation of N6-(dimethylallyl)adenosine (i(6)A), leading to the formation of 2-methylthio-N6-(dimethylallyl)adenosine (ms(2)i(6)A) at position 37 in tRNAs that read codons beginning with uridine. This Wolbachia pipientis subsp. Culex pipiens (strain wPip) protein is tRNA-2-methylthio-N(6)-dimethylallyladenosine synthase.